We begin with the raw amino-acid sequence, 450 residues long: Phosphoglucosamine mutase (450 aa).

The active-site Phosphoserine intermediate is the Ser-104. Positions 104, 241, 243, and 245 each coordinate Mg(2+). Position 104 is a phosphoserine (Ser-104).

Belongs to the phosphohexose mutase family. Mg(2+) serves as cofactor. In terms of processing, activated by phosphorylation.

It carries out the reaction alpha-D-glucosamine 1-phosphate = D-glucosamine 6-phosphate. Functionally, catalyzes the conversion of glucosamine-6-phosphate to glucosamine-1-phosphate. This chain is Phosphoglucosamine mutase, found in Renibacterium salmoninarum (strain ATCC 33209 / DSM 20767 / JCM 11484 / NBRC 15589 / NCIMB 2235).